A 61-amino-acid polypeptide reads, in one-letter code: Large ribosomal subunit protein eL37 (61 aa).

4 residues coordinate Zn(2+): Cys-20, Cys-23, Cys-35, and Cys-38. Residues 20-38 (CPRCGRHSYNIVKGYCAAC) form a C4-type zinc finger.

This sequence belongs to the eukaryotic ribosomal protein eL37 family. Requires Zn(2+) as cofactor.

Functionally, binds to the 23S rRNA. The polypeptide is Large ribosomal subunit protein eL37 (Caldivirga maquilingensis (strain ATCC 700844 / DSM 13496 / JCM 10307 / IC-167)).